A 233-amino-acid chain; its full sequence is Octanoyltransferase (233 aa).

A BPL/LPL catalytic domain is found at 32–213 (NNIDGILLLL…NFKMIFETDL (182 aa)). Substrate contacts are provided by residues 77–84 (RGGNVTYH), 144–146 (AIG), and 157–159 (GFA). Cys175 (acyl-thioester intermediate) is an active-site residue.

It belongs to the LipB family.

It localises to the cytoplasm. It catalyses the reaction octanoyl-[ACP] + L-lysyl-[protein] = N(6)-octanoyl-L-lysyl-[protein] + holo-[ACP] + H(+). It participates in protein modification; protein lipoylation via endogenous pathway; protein N(6)-(lipoyl)lysine from octanoyl-[acyl-carrier-protein]: step 1/2. In terms of biological role, catalyzes the transfer of endogenously produced octanoic acid from octanoyl-acyl-carrier-protein onto the lipoyl domains of lipoate-dependent enzymes. Lipoyl-ACP can also act as a substrate although octanoyl-ACP is likely to be the physiological substrate. The protein is Octanoyltransferase of Clostridium kluyveri (strain ATCC 8527 / DSM 555 / NBRC 12016 / NCIMB 10680 / K1).